Reading from the N-terminus, the 418-residue chain is Ig-like V-type domain-containing protein FAM187A (418 aa).

The signal sequence occupies residues methionine 1–alanine 18. The Extracellular segment spans residues phenylalanine 19–threonine 376. Residues proline 267–serine 361 form the Ig-like V-type domain. A disulfide bond links cysteine 289 and cysteine 345. The N-linked (GlcNAc...) asparagine glycan is linked to asparagine 317. Residues alanine 377–leucine 397 traverse the membrane as a helical segment. Over cysteine 398 to leucine 418 the chain is Cytoplasmic.

The protein belongs to the FAM187 family.

The protein localises to the membrane. The polypeptide is Ig-like V-type domain-containing protein FAM187A (Fam187a) (Rattus norvegicus (Rat)).